A 37-amino-acid polypeptide reads, in one-letter code: Large ribosomal subunit protein bL36 (37 aa).

Belongs to the bacterial ribosomal protein bL36 family.

This Francisella tularensis subsp. tularensis (strain FSC 198) protein is Large ribosomal subunit protein bL36.